The sequence spans 130 residues: Profilin-1 (130 aa).

The protein belongs to the profilin family. Interacts with actin. Interacts with RHO1 (GTP-bound form).

The protein resides in the cytoplasm. The protein localises to the cytoskeleton. Its subcellular location is the cell projection. It localises to the phagocytic cup. It is found in the cytoplasmic vesicle. The protein resides in the phagosome. In terms of biological role, binds to actin and affects the structure of the cytoskeleton. At high concentrations, profilin prevents the polymerization of actin, whereas it enhances it at low concentrations. By binding to PIP2, it inhibits the formation of IP3 and DG. This chain is Profilin-1, found in Entamoeba histolytica (strain ATCC 30459 / HM-1:IMSS / ABRM).